We begin with the raw amino-acid sequence, 332 residues long: 2,3-diketo-L-gulonate reductase (332 aa).

His-44 functions as the Proton donor in the catalytic mechanism. NAD(+)-binding positions include 168-174, 224-225, and 304-306; these read ITMVDMS, WK, and GHE.

This sequence belongs to the LDH2/MDH2 oxidoreductase family. DlgD subfamily. As to quaternary structure, homodimer.

It localises to the cytoplasm. It catalyses the reaction 3-dehydro-L-gulonate + NAD(+) = 2,3-dioxo-L-gulonate + NADH + H(+). The enzyme catalyses 3-dehydro-L-gulonate + NADP(+) = 2,3-dioxo-L-gulonate + NADPH + H(+). In terms of biological role, catalyzes the reduction of 2,3-diketo-L-gulonate in the presence of NADH, to form 3-keto-L-gulonate. The chain is 2,3-diketo-L-gulonate reductase from Salmonella typhimurium (strain LT2 / SGSC1412 / ATCC 700720).